The following is a 413-amino-acid chain: Gamma-glutamyl phosphate reductase (413 aa).

Belongs to the gamma-glutamyl phosphate reductase family.

The protein localises to the cytoplasm. It carries out the reaction L-glutamate 5-semialdehyde + phosphate + NADP(+) = L-glutamyl 5-phosphate + NADPH + H(+). The protein operates within amino-acid biosynthesis; L-proline biosynthesis; L-glutamate 5-semialdehyde from L-glutamate: step 2/2. In terms of biological role, catalyzes the NADPH-dependent reduction of L-glutamate 5-phosphate into L-glutamate 5-semialdehyde and phosphate. The product spontaneously undergoes cyclization to form 1-pyrroline-5-carboxylate. In Anoxybacillus flavithermus (strain DSM 21510 / WK1), this protein is Gamma-glutamyl phosphate reductase.